We begin with the raw amino-acid sequence, 315 residues long: Tubulin beta-1 chain (315 aa).

Serine 6, glycine 10, threonine 11, glycine 12, asparagine 72, and asparagine 94 together coordinate GTP. The tract at residues 295 to 315 (DATADEEEYYEDEEEEEAQGM) is disordered. Positions 297 to 315 (TADEEEYYEDEEEEEAQGM) are enriched in acidic residues.

This sequence belongs to the tubulin family. As to quaternary structure, dimer of alpha and beta chains. A typical microtubule is a hollow water-filled tube with an outer diameter of 25 nm and an inner diameter of 15 nM. Alpha-beta heterodimers associate head-to-tail to form protofilaments running lengthwise along the microtubule wall with the beta-tubulin subunit facing the microtubule plus end conferring a structural polarity. Microtubules usually have 13 protofilaments but different protofilament numbers can be found in some organisms and specialized cells. It depends on Mg(2+) as a cofactor.

Its subcellular location is the cytoplasm. The protein localises to the cytoskeleton. Tubulin is the major constituent of microtubules, a cylinder consisting of laterally associated linear protofilaments composed of alpha- and beta-tubulin heterodimers. Microtubules grow by the addition of GTP-tubulin dimers to the microtubule end, where a stabilizing cap forms. Below the cap, tubulin dimers are in GDP-bound state, owing to GTPase activity of alpha-tubulin. This is Tubulin beta-1 chain (TUBB1) from Daucus carota (Wild carrot).